The chain runs to 460 residues: Arginine decarboxylase (460 aa).

At K226 the chain carries N6-(pyridoxal phosphate)lysine.

The protein belongs to the Orn/Lys/Arg decarboxylase class-I family. Pyridoxal 5'-phosphate is required as a cofactor.

The protein resides in the cytoplasm. The enzyme catalyses L-arginine + H(+) = agmatine + CO2. It functions in the pathway amine and polyamine biosynthesis; agmatine biosynthesis; agmatine from L-arginine: step 1/1. Functionally, catalyzes the formation of agmatine from arginine. This chain is Arginine decarboxylase (speA), found in Bacillus cereus (strain ATCC 14579 / DSM 31 / CCUG 7414 / JCM 2152 / NBRC 15305 / NCIMB 9373 / NCTC 2599 / NRRL B-3711).